A 335-amino-acid polypeptide reads, in one-letter code: 3-isopropylmalate dehydrogenase (335 aa).

4 residues coordinate substrate: R87, R97, R121, and D211. The Mg(2+) site is built by D211, D235, and D239. Residue 271–283 participates in NAD(+) binding; it reads GSAPDIAGQSKAD.

It belongs to the isocitrate and isopropylmalate dehydrogenases family. LeuB type 2 subfamily. In terms of assembly, homodimer. Mg(2+) serves as cofactor. Requires Mn(2+) as cofactor.

It localises to the cytoplasm. The catalysed reaction is (2R,3S)-3-isopropylmalate + NAD(+) = 4-methyl-2-oxopentanoate + CO2 + NADH. The protein operates within amino-acid biosynthesis; L-leucine biosynthesis; L-leucine from 3-methyl-2-oxobutanoate: step 3/4. Functionally, catalyzes the oxidation of 3-carboxy-2-hydroxy-4-methylpentanoate (3-isopropylmalate) to 3-carboxy-4-methyl-2-oxopentanoate. The product decarboxylates to 4-methyl-2 oxopentanoate. In Nocardia farcinica (strain IFM 10152), this protein is 3-isopropylmalate dehydrogenase.